Here is a 375-residue protein sequence, read N- to C-terminus: Succinyl-diaminopimelate desuccinylase (375 aa).

Residue histidine 66 coordinates Zn(2+). Residue aspartate 68 is part of the active site. A Zn(2+)-binding site is contributed by aspartate 99. Glutamate 133 (proton acceptor) is an active-site residue. Residues glutamate 134, glutamate 162, and histidine 348 each coordinate Zn(2+).

The protein belongs to the peptidase M20A family. DapE subfamily. As to quaternary structure, homodimer. The cofactor is Zn(2+). Co(2+) serves as cofactor.

It catalyses the reaction N-succinyl-(2S,6S)-2,6-diaminopimelate + H2O = (2S,6S)-2,6-diaminopimelate + succinate. It functions in the pathway amino-acid biosynthesis; L-lysine biosynthesis via DAP pathway; LL-2,6-diaminopimelate from (S)-tetrahydrodipicolinate (succinylase route): step 3/3. In terms of biological role, catalyzes the hydrolysis of N-succinyl-L,L-diaminopimelic acid (SDAP), forming succinate and LL-2,6-diaminopimelate (DAP), an intermediate involved in the bacterial biosynthesis of lysine and meso-diaminopimelic acid, an essential component of bacterial cell walls. The sequence is that of Succinyl-diaminopimelate desuccinylase from Salmonella choleraesuis (strain SC-B67).